A 490-amino-acid chain; its full sequence is Bifunctional protein HldE (490 aa).

The segment at 1-328 (MFSFDALLQA…LRRRILPHAS (328 aa)) is ribokinase. Residue 205-208 (NRKE) coordinates ATP. Asp275 is a catalytic residue. The segment at 358 to 490 (FTNGCFDILH…LVARAREGQS (133 aa)) is cytidylyltransferase.

This sequence in the N-terminal section; belongs to the carbohydrate kinase PfkB family. It in the C-terminal section; belongs to the cytidylyltransferase family. Homodimer.

The catalysed reaction is D-glycero-beta-D-manno-heptose 7-phosphate + ATP = D-glycero-beta-D-manno-heptose 1,7-bisphosphate + ADP + H(+). The enzyme catalyses D-glycero-beta-D-manno-heptose 1-phosphate + ATP + H(+) = ADP-D-glycero-beta-D-manno-heptose + diphosphate. The protein operates within nucleotide-sugar biosynthesis; ADP-L-glycero-beta-D-manno-heptose biosynthesis; ADP-L-glycero-beta-D-manno-heptose from D-glycero-beta-D-manno-heptose 7-phosphate: step 1/4. It participates in nucleotide-sugar biosynthesis; ADP-L-glycero-beta-D-manno-heptose biosynthesis; ADP-L-glycero-beta-D-manno-heptose from D-glycero-beta-D-manno-heptose 7-phosphate: step 3/4. Functionally, catalyzes the phosphorylation of D-glycero-D-manno-heptose 7-phosphate at the C-1 position to selectively form D-glycero-beta-D-manno-heptose-1,7-bisphosphate. In terms of biological role, catalyzes the ADP transfer from ATP to D-glycero-beta-D-manno-heptose 1-phosphate, yielding ADP-D-glycero-beta-D-manno-heptose. The protein is Bifunctional protein HldE of Rhodopseudomonas palustris (strain TIE-1).